Consider the following 228-residue polypeptide: UPF0173 metal-dependent hydrolase lmo1577 (228 aa).

The protein belongs to the UPF0173 family.

The protein is UPF0173 metal-dependent hydrolase lmo1577 of Listeria monocytogenes serovar 1/2a (strain ATCC BAA-679 / EGD-e).